A 270-amino-acid chain; its full sequence is NADPH-dependent 7-cyano-7-deazaguanine reductase (270 aa).

Ile-79–Ser-81 is a substrate binding site. Ser-81–Lys-82 provides a ligand contact to NADPH. The active-site Thioimide intermediate is Cys-177. Asp-184 functions as the Proton donor in the catalytic mechanism. Residue His-216–Glu-217 participates in substrate binding. Arg-245–Gly-246 contributes to the NADPH binding site.

Belongs to the GTP cyclohydrolase I family. QueF type 2 subfamily. Homodimer.

The protein resides in the cytoplasm. The enzyme catalyses 7-aminomethyl-7-carbaguanine + 2 NADP(+) = 7-cyano-7-deazaguanine + 2 NADPH + 3 H(+). The protein operates within tRNA modification; tRNA-queuosine biosynthesis. Functionally, catalyzes the NADPH-dependent reduction of 7-cyano-7-deazaguanine (preQ0) to 7-aminomethyl-7-deazaguanine (preQ1). The polypeptide is NADPH-dependent 7-cyano-7-deazaguanine reductase (Acinetobacter baumannii (strain SDF)).